The chain runs to 709 residues: Nucleobase-ascorbate transporter 11 (709 aa).

Disordered regions lie at residues 1–28 and 58–167; these read MDSGSGFDPDTGNNKGNGSGGGNGYGER and TGFV…SEDG. Positions 15-25 are enriched in gly residues; sequence KGNGSGGGNGY. The span at 65–74 shows a compositional bias: polar residues; the sequence is SGETSTSTRT. Basic and acidic residues-rich tracts occupy residues 75–89, 108–132, and 142–151; these read KFGESSDFDLPKGRD, NRPEIEHVTGSEPVSREEEERRLNR, and EGGKINKDLE. 12 helical membrane passes run 196-216, 222-242, 246-266, 288-308, 310-330, 336-356, 369-389, 454-474, 532-552, 555-575, 590-610, and 642-662; these read YLSLVGSLVFIPLVIVPAMDG, ASVISTMLLLTGVTTILHCYF, LPLVQGSSFVYLAPVLVVINS, IIVGSLFQCILGFSGLMSLLL, FINPVVVAPTVAAVGLAFFSY, GTCVEISVPLILLLLIFTLYL, IYAVPLSALLIWTYAFFLTVG, IIMIFVSLVASVDSVGTYHSA, LVIGAMFLIVLSFLGKLGAIL, IPQALAASVLCFIWALTVSLG, ITIVGVSLFLGLSIPAYFQQY, and FAMNAVLSLNMVVTFLLAFIL.

It belongs to the nucleobase:cation symporter-2 (NCS2) (TC 2.A.40) family. As to expression, expressed in leaf primordia and vasculature of pedicels, rosette leaves, sepals, carpels and siliques. Expressed in the root central cylinder.

The protein resides in the membrane. In Arabidopsis thaliana (Mouse-ear cress), this protein is Nucleobase-ascorbate transporter 11 (NAT11).